The sequence spans 394 residues: 1-deoxy-D-xylulose 5-phosphate reductoisomerase (394 aa).

NADPH is bound by residues T10, G11, S12, I13, G38, R39, N40, and N123. K124 lines the 1-deoxy-D-xylulose 5-phosphate pocket. Residue E125 coordinates NADPH. D149 contributes to the Mn(2+) binding site. 1-deoxy-D-xylulose 5-phosphate-binding residues include S150, E151, S175, and H198. E151 contacts Mn(2+). Residue G204 coordinates NADPH. The 1-deoxy-D-xylulose 5-phosphate site is built by S211, N216, K217, and E220. Position 220 (E220) interacts with Mn(2+).

The protein belongs to the DXR family. Requires Mg(2+) as cofactor. It depends on Mn(2+) as a cofactor.

The enzyme catalyses 2-C-methyl-D-erythritol 4-phosphate + NADP(+) = 1-deoxy-D-xylulose 5-phosphate + NADPH + H(+). It functions in the pathway isoprenoid biosynthesis; isopentenyl diphosphate biosynthesis via DXP pathway; isopentenyl diphosphate from 1-deoxy-D-xylulose 5-phosphate: step 1/6. Its function is as follows. Catalyzes the NADPH-dependent rearrangement and reduction of 1-deoxy-D-xylulose-5-phosphate (DXP) to 2-C-methyl-D-erythritol 4-phosphate (MEP). The polypeptide is 1-deoxy-D-xylulose 5-phosphate reductoisomerase (Cereibacter sphaeroides (strain ATCC 17029 / ATH 2.4.9) (Rhodobacter sphaeroides)).